Consider the following 609-residue polypeptide: Dynamin-like protein 2 (609 aa).

Positions 1–16 (MQINLLNDFIKAYENT) are inserts into assembly domain of DLP1, required for tetramerization. The segment at 17-25 (YSVSFDDSF) is linker. The Dynamin-type G domain maps to 63–310 (NIAIIGQFSS…FVGIFDRLLN (248 aa)). The interval 68–75 (GQFSSGKS) is G1 motif. Residue 72–76 (SGKSS) participates in GDP binding. A G2 motif region spans residues 93–95 (PVT). Residues 158–161 (DTPG) are G3 motif. Residues 216 to 219 (NQKD) form a G4 motif region.

This sequence belongs to the TRAFAC class dynamin-like GTPase superfamily. Dynamin/Fzo/YdjA family. As to quaternary structure, forms a 2:2 heterotetramer with DLP1. DLP2 forms a central back-to-back dimer flanked on each side by a DLP1 subunit. In the crystal structures the 2 DLP1 subunits are in very different conformations.

The protein resides in the cytoplasm. It is found in the cytosol. It carries out the reaction GTP + H2O = GDP + phosphate + H(+). The heterotetrameric DLP1(2)-DLP2(2) complex tethers liposomes and may mediate their fusion. Initial binding is probably mediated by DLP1, while DLP2 couples DLP1 subunits and increases the effective reach of the complex up to 45 nm. The role of the nucleotide is unknown. This subunit alone very weakly binds to liposomes; GTP, GDP, GMPPCP and GMPPNP do not change heterotetramer binding. Tetramerization is required for GTPase activity, suggesting the GTPase domains (dynamin-type G) from DLP1 and DLP2 must dimerize to reconstitute the GTPase active site. This chain is Dynamin-like protein 2, found in Campylobacter jejuni subsp. jejuni serotype O:23/36 (strain 81-176).